The chain runs to 116 residues: Large ribosomal subunit protein bL19 (116 aa).

It belongs to the bacterial ribosomal protein bL19 family.

This protein is located at the 30S-50S ribosomal subunit interface and may play a role in the structure and function of the aminoacyl-tRNA binding site. This is Large ribosomal subunit protein bL19 from Solidesulfovibrio magneticus (strain ATCC 700980 / DSM 13731 / RS-1) (Desulfovibrio magneticus).